A 374-amino-acid polypeptide reads, in one-letter code: UDP-N-acetylglucosamine--N-acetylmuramyl-(pentapeptide) pyrophosphoryl-undecaprenol N-acetylglucosamine transferase (374 aa).

UDP-N-acetyl-alpha-D-glucosamine contacts are provided by residues 13 to 15, asparagine 124, arginine 165, serine 193, and glutamine 294; that span reads TGG.

Belongs to the glycosyltransferase 28 family. MurG subfamily.

The protein localises to the cell inner membrane. The enzyme catalyses di-trans,octa-cis-undecaprenyl diphospho-N-acetyl-alpha-D-muramoyl-L-alanyl-D-glutamyl-meso-2,6-diaminopimeloyl-D-alanyl-D-alanine + UDP-N-acetyl-alpha-D-glucosamine = di-trans,octa-cis-undecaprenyl diphospho-[N-acetyl-alpha-D-glucosaminyl-(1-&gt;4)]-N-acetyl-alpha-D-muramoyl-L-alanyl-D-glutamyl-meso-2,6-diaminopimeloyl-D-alanyl-D-alanine + UDP + H(+). Its pathway is cell wall biogenesis; peptidoglycan biosynthesis. Its function is as follows. Cell wall formation. Catalyzes the transfer of a GlcNAc subunit on undecaprenyl-pyrophosphoryl-MurNAc-pentapeptide (lipid intermediate I) to form undecaprenyl-pyrophosphoryl-MurNAc-(pentapeptide)GlcNAc (lipid intermediate II). This chain is UDP-N-acetylglucosamine--N-acetylmuramyl-(pentapeptide) pyrophosphoryl-undecaprenol N-acetylglucosamine transferase, found in Rhizobium etli (strain CIAT 652).